The following is a 498-amino-acid chain: DNA-directed RNA polymerase subunit Rpo2N (498 aa).

This sequence belongs to the RNA polymerase beta chain family. Part of the RNA polymerase complex.

The protein resides in the cytoplasm. It catalyses the reaction RNA(n) + a ribonucleoside 5'-triphosphate = RNA(n+1) + diphosphate. DNA-dependent RNA polymerase (RNAP) catalyzes the transcription of DNA into RNA using the four ribonucleoside triphosphates as substrates. The Rpo2 subunit (Rpo2N and Rpo2C in this organism) is implicated in DNA promoter recognition and in nucleotide binding. This is DNA-directed RNA polymerase subunit Rpo2N from Methanocaldococcus jannaschii (strain ATCC 43067 / DSM 2661 / JAL-1 / JCM 10045 / NBRC 100440) (Methanococcus jannaschii).